We begin with the raw amino-acid sequence, 161 residues long: Putative defense protein 2 (161 aa).

Residues 1–11 form the signal peptide; the sequence is LSWSALALTSA. Residues 12-161 form the Reelin domain; sequence YPTGAPTSAC…SAPVKILSHH (150 aa). A disulfide bond links cysteine 21 and cysteine 98. Residue asparagine 91 is glycosylated (N-linked (GlcNAc...) asparagine).

The protein belongs to the insect defense protein family.

The protein localises to the secreted. In terms of biological role, may have antimicrobial activity. This is Putative defense protein 2 from Antheraea mylitta (Tasar silkworm).